The chain runs to 698 residues: Serotransferrin (698 aa).

Positions 1 to 19 (MRFAVGALLACAALGLCLA) are cleaved as a signal peptide. 2 consecutive Transferrin-like domains span residues 25–347 (VKWC…NQRE) and 360–683 (VKWC…NIRK). 2 cysteine pairs are disulfide-bonded: Cys-28/Cys-67 and Cys-38/Cys-58. Position 42 is a dimethylated arginine (Arg-42). Fe(3+) contacts are provided by Asp-82 and Tyr-114. Intrachain disulfides connect Cys-137-Cys-213, Cys-156-Cys-350, Cys-177-Cys-193, Cys-180-Cys-196, Cys-190-Cys-198, Cys-246-Cys-260, Cys-363-Cys-395, and Cys-373-Cys-386. Residues Thr-139, Arg-143, Ala-145, and Gly-146 each coordinate hydrogencarbonate. Tyr-207 contributes to the Fe(3+) binding site. His-268 serves as a coordination point for Fe(3+). A Phosphoserine modification is found at Ser-388. Residues Asp-410 and Tyr-447 each contribute to the Fe(3+) site. 8 disulfide bridges follow: Cys-420-Cys-693, Cys-435-Cys-656, Cys-471-Cys-542, Cys-495-Cys-684, Cys-505-Cys-519, Cys-516-Cys-525, Cys-582-Cys-596, and Cys-634-Cys-639. The hydrogencarbonate site is built by Thr-473, Arg-477, Ala-479, and Gly-480. A glycan (N-linked (GlcNAc...) asparagine) is linked at Asn-512. Tyr-536 provides a ligand contact to Fe(3+). His-604 lines the Fe(3+) pocket. Residue Ser-685 is modified to Phosphoserine.

Belongs to the transferrin family. As to quaternary structure, monomer. Part of a complex composed of SLC40A1/ferroportin, TF/transferrin and HEPH/hephaestin that transfers iron from cells to transferrin. In terms of tissue distribution, expressed by the liver and secreted in plasma.

It is found in the secreted. Its function is as follows. Transferrins are iron binding transport proteins which can bind two Fe(3+) ions in association with the binding of an anion, usually bicarbonate. It is responsible for the transport of iron from sites of absorption and heme degradation to those of storage and utilization. Serum transferrin may also have a further role in stimulating cell proliferation. The chain is Serotransferrin (Tf) from Rattus norvegicus (Rat).